We begin with the raw amino-acid sequence, 280 residues long: DegV domain-containing protein CA_C1624 (280 aa).

One can recognise a DegV domain in the interval 4-279 (IALITDSTSD…PGLLGVVIFK (276 aa)). The hexadecanoate site is built by T60 and S93.

Its function is as follows. May bind long-chain fatty acids, such as palmitate, and may play a role in lipid transport or fatty acid metabolism. This is DegV domain-containing protein CA_C1624 from Clostridium acetobutylicum (strain ATCC 824 / DSM 792 / JCM 1419 / IAM 19013 / LMG 5710 / NBRC 13948 / NRRL B-527 / VKM B-1787 / 2291 / W).